The sequence spans 280 residues: Transcription factor ovo-like homolog lin-48 (280 aa).

4 C2H2-type zinc fingers span residues 133–155 (LTCH…IKCH), 161–183 (YLCT…TRTH), 189–212 (YKCE…RKVH), and 228–251 (FVCE…KVVH).

It is found in the nucleus. In terms of biological role, transcription factor. Involved in development of the hindgut, the male tail, and the excretory duct cell. Involved in modulating function of excretory duct cells. Plays a role in left/right patterning of cell fates in the hindgut. The protein is Transcription factor ovo-like homolog lin-48 of Caenorhabditis elegans.